We begin with the raw amino-acid sequence, 98 residues long: NADH-ubiquinone oxidoreductase chain 4L (98 aa).

The next 3 membrane-spanning stretches (helical) occupy residues 1-21, 29-49, and 61-81; these read MSLTYMNMFLAFTISLVGLLM, ALLCLEGMMLSLFVMMTITIL, and IILLVFAACEAALGLSLLVMV.

The protein belongs to the complex I subunit 4L family. Core subunit of respiratory chain NADH dehydrogenase (Complex I) which is composed of 45 different subunits.

The protein resides in the mitochondrion inner membrane. The catalysed reaction is a ubiquinone + NADH + 5 H(+)(in) = a ubiquinol + NAD(+) + 4 H(+)(out). Its function is as follows. Core subunit of the mitochondrial membrane respiratory chain NADH dehydrogenase (Complex I) which catalyzes electron transfer from NADH through the respiratory chain, using ubiquinone as an electron acceptor. Part of the enzyme membrane arm which is embedded in the lipid bilayer and involved in proton translocation. The protein is NADH-ubiquinone oxidoreductase chain 4L (MT-ND4L) of Rhinophylla pumilio (Dwarf little fruit bat).